The primary structure comprises 251 residues: Tropomyosin-2 (251 aa).

Residues 1–251 (MSGEEKLGKL…DTVADEPDDE (251 aa)) adopt a coiled-coil conformation.

This sequence belongs to the tropomyosin family. In terms of assembly, homodimer. Striated muscle specific.

This is Tropomyosin-2 (TPM2) from Podocoryna carnea (Hydrozoan).